Here is a 235-residue protein sequence, read N- to C-terminus: Motile sperm domain-containing protein 3 (235 aa).

Disordered stretches follow at residues 1–25 (MRRG…RGAP) and 143–171 (ELQG…FQEH). The 113-residue stretch at 33–145 (PVLVFPPDLV…RAPAYPLELQ (113 aa)) folds into the MSP domain. Residues 149–164 (DPAPRPGPPAGTPPPT) show a composition bias toward pro residues. The next 2 helical transmembrane spans lie at 180–200 (SFLL…LPLP) and 213–233 (VSLG…MVFL).

Its subcellular location is the membrane. This is Motile sperm domain-containing protein 3 (MOSPD3) from Homo sapiens (Human).